Here is a 360-residue protein sequence, read N- to C-terminus: MITHRSNNVQYEVTPPSVEEDLGPQFEFYWTRQKDPHSIRRKLILAKHPEVAKLCGPEWRTKYIASAVVLLQLSIAYALKNTPVLSFKFLALAYVVGATANQNCFLCIHELSHNLAFRKPLHNKLFAIWVNLPIGVPYSASFQPYHQLHHKFLGDEVLDTDLPTPLEATVLSSLLGKAFFATFQIFFYALRPMMVTSIDMTFIHLLNVLVCLVSDFILIKFGSANSLWYLILSSFFAGSLHPTAGHFIAEHYLLDPPKHYTQFQDVPPLETYSYYGMLNLFTWNVGYHNEHHDFPFIAWSKLPLLRTIAHDFYQPLPKHTSWVRVIVDFIFDENVLMYNRVKRETAKDKSVDSKTTKTQS.

3 helical membrane passes run 67 to 87, 89 to 109, and 125 to 145; these read AVVL…VLSF, FLAL…LCIH, and LFAI…FQPY. The short motif at 109–113 is the Histidine box-1 element; the sequence is HELSH. Positions 146–150 match the Histidine box-2 motif; sequence HQLHH. Helical transmembrane passes span 170-190, 202-222, and 228-248; these read VLSS…FYAL, FIHL…IKFG, and WYLI…GHFI. Residues 288–292 carry the Histidine box-3 motif; that stretch reads HNEHH.

It belongs to the fatty acid desaturase type 1 family. DEGS subfamily.

The protein localises to the membrane. The catalysed reaction is an N-acylsphinganine + 2 Fe(II)-[cytochrome b5] + O2 + 2 H(+) = an N-acylsphing-4-enine + 2 Fe(III)-[cytochrome b5] + 2 H2O. It functions in the pathway lipid metabolism; sphingolipid metabolism. Its function is as follows. Delta(4)-fatty-acid desaturase which introduces a double bond at the 4-position in the long-chain base (LCB) of ceramides. Required for the formation of the monounsaturated sphingoid base (E)-sphing-4-enine during glucosylceramide (GluCer) biosynthesis. This Komagataella phaffii (strain GS115 / ATCC 20864) (Yeast) protein is Sphingolipid delta(4)-desaturase.